We begin with the raw amino-acid sequence, 337 residues long: Ribosomal RNA small subunit methyltransferase H (337 aa).

Residues Gly-36 to His-38, Asp-56, Phe-82, Asp-100, and Gln-107 contribute to the S-adenosyl-L-methionine site. Residues Arg-317–Arg-337 form a disordered region.

Belongs to the methyltransferase superfamily. RsmH family.

It is found in the cytoplasm. The catalysed reaction is cytidine(1402) in 16S rRNA + S-adenosyl-L-methionine = N(4)-methylcytidine(1402) in 16S rRNA + S-adenosyl-L-homocysteine + H(+). In terms of biological role, specifically methylates the N4 position of cytidine in position 1402 (C1402) of 16S rRNA. The chain is Ribosomal RNA small subunit methyltransferase H from Xanthomonas oryzae pv. oryzae (strain KACC10331 / KXO85).